We begin with the raw amino-acid sequence, 854 residues long: N-terminal acetyltransferase A complex subunit NAT1 (854 aa).

N-acetylserine is present on Ser2. 7 TPR repeats span residues 20 to 53 (ENDQ…DGSH), 54 to 87 (VDSL…IEGA), 91 to 124 (PICC…GSTN), 126 to 162 (QIYR…RANW), 241 to 274 (FGLL…NPDN), 384 to 417 (IWTN…TPTL), and 452 to 485 (RFIN…DDSV). The stretch at 623 to 667 (LKRKSDSLDENSDEIQNNGQNSSSQKKKAKKEAAAMNKRKETEAK) forms a coiled coil. Positions 626-668 (KSDSLDENSDEIQNNGQNSSSQKKKAKKEAAAMNKRKETEAKS) are disordered. Ser674 is subject to Phosphoserine. Residues 728–761 (ALCFASLNKFAKRFGTTSGLFGSMAIVLLHATRN) form a TPR 8 repeat.

In terms of assembly, component of the N-terminal acetyltransferase A (NatA) complex, which is composed of ARD1, NAT1 and NAT5. Can self-associate. NAT1 associates with the nascent polypeptide chain and the ribosome. Post-translationally, the N-terminus is blocked.

Its subcellular location is the cytoplasm. Its function is as follows. Non-catalytic component of the NatA N-terminal acetyltransferase, which catalyzes acetylation of proteins beginning with Met-Ser, Met-Gly and Met-Ala. N-acetylation plays a role in normal eukaryotic translation and processing, protect against proteolytic degradation and protein turnover. NAT1 anchors ARD1 and NAT5 to the ribosome and may present the N termini of nascent polypeptides for acetylation. This is N-terminal acetyltransferase A complex subunit NAT1 (NAT1) from Saccharomyces cerevisiae (strain ATCC 204508 / S288c) (Baker's yeast).